The primary structure comprises 244 residues: tRNA (guanine-N(1)-)-methyltransferase (244 aa).

S-adenosyl-L-methionine contacts are provided by residues glycine 112 and 131 to 136 (LGDFIL). The disordered stretch occupies residues 211 to 244 (IKRTSDRRPDLLEKWQQEKKPGSREQGSREQGEK).

It belongs to the RNA methyltransferase TrmD family. As to quaternary structure, homodimer.

The protein resides in the cytoplasm. The enzyme catalyses guanosine(37) in tRNA + S-adenosyl-L-methionine = N(1)-methylguanosine(37) in tRNA + S-adenosyl-L-homocysteine + H(+). Its function is as follows. Specifically methylates guanosine-37 in various tRNAs. This chain is tRNA (guanine-N(1)-)-methyltransferase, found in Trichormus variabilis (strain ATCC 29413 / PCC 7937) (Anabaena variabilis).